The primary structure comprises 177 residues: Large ribosomal subunit protein uL6 (177 aa).

The protein belongs to the universal ribosomal protein uL6 family. Part of the 50S ribosomal subunit.

In terms of biological role, this protein binds to the 23S rRNA, and is important in its secondary structure. It is located near the subunit interface in the base of the L7/L12 stalk, and near the tRNA binding site of the peptidyltransferase center. This chain is Large ribosomal subunit protein uL6, found in Dichelobacter nodosus (strain VCS1703A).